A 714-amino-acid polypeptide reads, in one-letter code: MSEEIITPVYCTGVSAQVQKQRARELGLGRHENAIKYLGQDYEQLRVRCLQSGTLFRDEAFPPVPQSLGYKDLGPNSSKTYGIKWKRPTELLSNPQFIVDGATRTDICQGALGDCWLLAAIASLTLNDTLLHRVVPHGQSFQNGYAGIFHFQLWQFGEWVDVVVDDLLPIKDGKLVFVHSAEGNEFWSALLEKAYAKVNGSYEALSGGSTSEGFEDFTGGVTEWYELRKAPSDLYQIILKALERGSLLGCSIDISSVLDMEAITFKKLVKGHAYSVTGAKQVNYRGQVVSLIRMRNPWGEVEWTGAWSDSSSEWNNVDPYERDQLRVKMEDGEFWMSFRDFMREFTRLEICNLTPDALKSRTIRKWNTTLYEGTWRRGSTAGGCRNYPATFWVNPQFKIRLDETDDPDDYGDRESGCSFVLALMQKHRRRERRFGRDMETIGFAVYEVPPELVGQPAVHLKRDFFLANASRARSEQFINLREVSTRFRLPPGEYVVVPSTFEPNKEGDFVLRFFSEKSAGTVELDDQIQANLPDEQVLSEEEIDENFKALFRQLAGEDMEISVKELRTILNRIISKHKDLRTKGFSLESCRSMVNLMDRDGNGKLGLVEFNILWNRIRNYLSIFRKFDLDKSGSMSAYEMRMAIESAGFKLNKKLYELIITRYSEPDLAVDFDNFVCCLVRLETMFRFFKTLDTDLDGVVTFDLFKWLQLTMFA.

S2 is modified (N-acetylserine). The Calpain catalytic domain maps to 55–354 (LFRDEAFPPV…FTRLEICNLT (300 aa)). Residues Q109 and D114 each coordinate Ca(2+). Catalysis depends on residues C115, H272, and N296. N316, D318, and D323 together coordinate Ca(2+). T354 is modified (phosphothreonine). The interval 355–526 (PDALKSRTIR…KSAGTVELDD (172 aa)) is domain III. Residues 527-542 (QIQANLPDEQVLSEEE) are linker. EF-hand domains follow at residues 541-576 (EEIDENFKALFRQLAGEDMEISVKELRTILNRIISK), 585-618 (FSLESCRSMVNLMDRDGNGKLGLVEFNILWNRIR), 615-650 (NRIRNYLSIFRKFDLDKSGSMSAYEMRMAIESAGFK), and 680-714 (VRLETMFRFFKTLDTDLDGVVTFDLFKWLQLTMFA). Residues 543–713 (IDENFKALFR…LFKWLQLTMF (171 aa)) form a domain IV region. Positions 598, 600, 602, 604, 609, 628, 630, 632, 634, and 639 each coordinate Ca(2+).

This sequence belongs to the peptidase C2 family. In terms of assembly, forms a heterodimer with a small (regulatory) subunit CAPNS1. Ca(2+) serves as cofactor. Post-translationally, undergoes calcium-induced successive autoproteolytic cleavages that generate a membrane-bound 78 kDa active form and an intracellular 75 kDa active form. Calpastatin reduces with high efficiency the transition from 78 kDa to 75 kDa calpain forms. As to expression, ubiquitous.

The protein resides in the cytoplasm. The protein localises to the cell membrane. The catalysed reaction is Broad endopeptidase specificity.. Activated by micromolar concentrations of calcium and inhibited by calpastatin. Calcium-regulated non-lysosomal thiol-protease which catalyzes limited proteolysis of substrates involved in cytoskeletal remodeling and signal transduction. Proteolytically cleaves CTBP1 at 'Asn-375', 'Gly-387' and 'His-409'. Cleaves and activates caspase-7 (CASP7). The polypeptide is Calpain-1 catalytic subunit (Homo sapiens (Human)).